The sequence spans 419 residues: Ribosome biogenesis protein WDR12 homolog (419 aa).

Residues 10 to 91 (VQVHLKTKQE…EDAIEIEYVE (82 aa)) are ubiquitin-like (UBL) domain. 7 WD repeats span residues 103–141 (LHDD…LTIP), 142–184 (GHTA…NTVE), 191–230 (GHER…AGEG), 249–287 (GHRE…IKAE), 289–328 (STNK…GSVV), 334–374 (GHNA…APLY), and 378–416 (GHGE…VENM).

This sequence belongs to the WD repeat WDR12/YTM1 family.

It localises to the nucleus. The protein resides in the nucleolus. The protein localises to the nucleoplasm. Its function is as follows. Required for maturation of ribosomal RNAs and formation of the large ribosomal subunit. The polypeptide is Ribosome biogenesis protein WDR12 homolog (Drosophila pseudoobscura pseudoobscura (Fruit fly)).